The chain runs to 917 residues: Protein Ami (917 aa).

Residues 1 to 30 (MKKLVKSAVVFAGLVFIGTSATMITEKASA) form the signal peptide. The N-acetylmuramoyl-L-alanine amidase domain maps to 118 to 245 (KPEGIVIHET…YLGGTTHTDP (128 aa)). Positions 262 to 917 (LINEKYKAMQ…KAANLSAKKQ (656 aa)) are GW repeat region, necessary and sufficient for cell surface attachment. 8 consecutive GW domains span residues 279–358 (YDKA…TFYT), 361–435 (MEKT…TTKY), 440–519 (YDKA…TFYT), 522–596 (MEKN…ATQY), 601–679 (YDKA…TFYT), 682–756 (MEKT…TTKY), 761–840 (YDKA…TFYT), and 843–917 (MEKN…AKKQ).

The protein in the N-terminal section; belongs to the N-acetylmuramoyl-L-alanine amidase 2 family.

The protein resides in the cell surface. Its subcellular location is the cell membrane. A bacteriolysin able to lyse both L.monocytogenes and S.aureus. The sequence is that of Protein Ami from Listeria monocytogenes serotype 1/2a (strain EGD / Mackaness).